Here is a 334-residue protein sequence, read N- to C-terminus: E3 ubiquitin-protein ligase ATL4 (334 aa).

A disordered region spans residues Met-1–Ser-20. The helical transmembrane segment at Val-28–Leu-48 threads the bilayer. An RING-type; atypical zinc finger spans residues Cys-117–Arg-159.

This sequence belongs to the RING-type zinc finger family. ATL subfamily.

It localises to the membrane. The enzyme catalyses S-ubiquitinyl-[E2 ubiquitin-conjugating enzyme]-L-cysteine + [acceptor protein]-L-lysine = [E2 ubiquitin-conjugating enzyme]-L-cysteine + N(6)-ubiquitinyl-[acceptor protein]-L-lysine.. It functions in the pathway protein modification; protein ubiquitination. Functionally, E3 ubiquitin-protein ligase able to catalyze polyubiquitination with ubiquitin-conjugating enzyme E2 UBC8 in vitro. In Arabidopsis thaliana (Mouse-ear cress), this protein is E3 ubiquitin-protein ligase ATL4.